A 322-amino-acid chain; its full sequence is Glucokinase (322 aa).

Residue 10-15 participates in ATP binding; it reads GDIGGT.

It belongs to the bacterial glucokinase family.

The protein localises to the cytoplasm. The catalysed reaction is D-glucose + ATP = D-glucose 6-phosphate + ADP + H(+). The protein is Glucokinase of Hahella chejuensis (strain KCTC 2396).